A 315-amino-acid chain; its full sequence is Ribosomal protein L11 methyltransferase (315 aa).

Residues Thr-164, Gly-185, Asp-207, and Asn-250 each contribute to the S-adenosyl-L-methionine site.

This sequence belongs to the methyltransferase superfamily. PrmA family.

The protein localises to the cytoplasm. The catalysed reaction is L-lysyl-[protein] + 3 S-adenosyl-L-methionine = N(6),N(6),N(6)-trimethyl-L-lysyl-[protein] + 3 S-adenosyl-L-homocysteine + 3 H(+). In terms of biological role, methylates ribosomal protein L11. This Exiguobacterium sibiricum (strain DSM 17290 / CCUG 55495 / CIP 109462 / JCM 13490 / 255-15) protein is Ribosomal protein L11 methyltransferase.